A 353-amino-acid chain; its full sequence is Photosystem II protein D1 (353 aa).

Thr2 is modified (N-acetylthreonine). A Phosphothreonine modification is found at Thr2. Transmembrane regions (helical) follow at residues Tyr29 to Ser46, His118 to Leu133, and Trp142 to Ala156. His118 provides a ligand contact to chlorophyll a. Tyr126 is a pheophytin a binding site. The [CaMn4O5] cluster site is built by Asp170 and Glu189. Residues Phe197–Leu218 traverse the membrane as a helical segment. Residue His198 participates in chlorophyll a binding. A quinone-binding positions include His215 and Ser264–Phe265. Residue His215 coordinates Fe cation. His272 contributes to the Fe cation binding site. Residues Phe274–Leu288 form a helical membrane-spanning segment. Positions 332, 333, 342, and 344 each coordinate [CaMn4O5] cluster. Positions Ala345–Gly353 are excised as a propeptide.

This sequence belongs to the reaction center PufL/M/PsbA/D family. In terms of assembly, PSII is composed of 1 copy each of membrane proteins PsbA, PsbB, PsbC, PsbD, PsbE, PsbF, PsbH, PsbI, PsbJ, PsbK, PsbL, PsbM, PsbT, PsbX, PsbY, PsbZ, Psb30/Ycf12, at least 3 peripheral proteins of the oxygen-evolving complex and a large number of cofactors. It forms dimeric complexes. The cofactor is The D1/D2 heterodimer binds P680, chlorophylls that are the primary electron donor of PSII, and subsequent electron acceptors. It shares a non-heme iron and each subunit binds pheophytin, quinone, additional chlorophylls, carotenoids and lipids. D1 provides most of the ligands for the Mn4-Ca-O5 cluster of the oxygen-evolving complex (OEC). There is also a Cl(-1) ion associated with D1 and D2, which is required for oxygen evolution. The PSII complex binds additional chlorophylls, carotenoids and specific lipids.. Post-translationally, tyr-161 forms a radical intermediate that is referred to as redox-active TyrZ, YZ or Y-Z. C-terminally processed by CTPA; processing is essential to allow assembly of the oxygen-evolving complex and thus photosynthetic growth.

It localises to the plastid. The protein resides in the chloroplast thylakoid membrane. The enzyme catalyses 2 a plastoquinone + 4 hnu + 2 H2O = 2 a plastoquinol + O2. Its function is as follows. Photosystem II (PSII) is a light-driven water:plastoquinone oxidoreductase that uses light energy to abstract electrons from H(2)O, generating O(2) and a proton gradient subsequently used for ATP formation. It consists of a core antenna complex that captures photons, and an electron transfer chain that converts photonic excitation into a charge separation. The D1/D2 (PsbA/PsbD) reaction center heterodimer binds P680, the primary electron donor of PSII as well as several subsequent electron acceptors. The protein is Photosystem II protein D1 of Gossypium barbadense (Sea Island cotton).